The primary structure comprises 226 residues: Holliday junction branch migration complex subunit RuvA (226 aa).

Positions 1–67 are domain I; that stretch reads MITSVYAKIE…AINKELYAFK (67 aa). The tract at residues 68 to 145 is domain II; sequence SLKEKEWFKA…YLKNQIVVSD (78 aa). The tract at residues 146-167 is flexible linker; that stretch reads KVEPQIDDDEKIDDSKDLNDDE. Residues 168-226 form a domain III region; the sequence is LLSEIVIEAIDCLISLGYKQEQIKTALAEIDLKNESINDSADLVAVIIKQIGLRTSEVS.

The protein belongs to the RuvA family. Homotetramer. Forms an RuvA(8)-RuvB(12)-Holliday junction (HJ) complex. HJ DNA is sandwiched between 2 RuvA tetramers; dsDNA enters through RuvA and exits via RuvB. An RuvB hexamer assembles on each DNA strand where it exits the tetramer. Each RuvB hexamer is contacted by two RuvA subunits (via domain III) on 2 adjacent RuvB subunits; this complex drives branch migration. In the full resolvosome a probable DNA-RuvA(4)-RuvB(12)-RuvC(2) complex forms which resolves the HJ.

It is found in the cytoplasm. In terms of biological role, the RuvA-RuvB-RuvC complex processes Holliday junction (HJ) DNA during genetic recombination and DNA repair, while the RuvA-RuvB complex plays an important role in the rescue of blocked DNA replication forks via replication fork reversal (RFR). RuvA specifically binds to HJ cruciform DNA, conferring on it an open structure. The RuvB hexamer acts as an ATP-dependent pump, pulling dsDNA into and through the RuvAB complex. HJ branch migration allows RuvC to scan DNA until it finds its consensus sequence, where it cleaves and resolves the cruciform DNA. The polypeptide is Holliday junction branch migration complex subunit RuvA (Mycoplasmoides gallisepticum (strain R(low / passage 15 / clone 2)) (Mycoplasma gallisepticum)).